A 646-amino-acid chain; its full sequence is UvrABC system protein C (646 aa).

One can recognise a GIY-YIG domain in the interval 16 to 95; that stretch reads VEPGVYRFRD…IKEFDPRFNV (80 aa). Residues 208-243 enclose the UVR domain; it reads DRFARALEQQMNAAAEQLDFERAARLRDDLSALKRA.

This sequence belongs to the UvrC family. As to quaternary structure, interacts with UvrB in an incision complex.

The protein localises to the cytoplasm. Functionally, the UvrABC repair system catalyzes the recognition and processing of DNA lesions. UvrC both incises the 5' and 3' sides of the lesion. The N-terminal half is responsible for the 3' incision and the C-terminal half is responsible for the 5' incision. The chain is UvrABC system protein C from Mycobacterium bovis (strain BCG / Pasteur 1173P2).